Consider the following 523-residue polypeptide: Alpha,alpha-trehalose-phosphate synthase [UDP-forming] (523 aa).

Residues Tyr98 and Asp152 each coordinate D-glucose 6-phosphate. UDP contacts are provided by Arg288 and Lys293. UDP-alpha-D-glucose is bound by residues Arg288 and Lys293. Arg326 lines the D-glucose 6-phosphate pocket. Residue 387–395 participates in UDP-alpha-D-glucose binding; it reads DGMNLVSYE. 391–395 lines the UDP pocket; sequence LVSYE. The disordered stretch occupies residues 503-523; sequence QQFNLGEQREEGRLEPGEFDD. Basic and acidic residues predominate over residues 509 to 523; it reads EQREEGRLEPGEFDD.

It belongs to the glycosyltransferase 20 family.

The catalysed reaction is D-glucose 6-phosphate + UDP-alpha-D-glucose = alpha,alpha-trehalose 6-phosphate + UDP + H(+). Its pathway is carbohydrate biosynthesis. Synthase catalytic subunit of the trehalose synthase complex that catalyzes the production of trehalose from glucose-6-phosphate and UDP-alpha-D-glucose in a two step process. The disaccharide trehalose serves as a storage carbohydrate that is mobilized during conidial germination. Trehalose also serves as a protectant for cell integrity during stress. The polypeptide is Alpha,alpha-trehalose-phosphate synthase [UDP-forming] (Botryotinia fuckeliana (strain B05.10) (Noble rot fungus)).